Here is a 291-residue protein sequence, read N- to C-terminus: uncharacterized protein (291 aa).

Disordered stretches follow at residues 29–50 and 168–291; these read SEKP…LRDS and RKVK…AELK. The residue at position 50 (serine 50) is a Phosphoserine. Polar residues-rich tracts occupy residues 176–186 and 205–217; these read NSKNPSKTGTP and QKNS…SKLI. The segment covering 221–237 has biased composition (basic and acidic residues); it reads YKDEWLQQQKAEADRRT. Polar residues predominate over residues 280-291; the sequence is SSPSESTPAELK.

This is an uncharacterized protein from Mus musculus (Mouse).